A 226-amino-acid chain; its full sequence is HTH-type transcriptional regulator Rv0324 (226 aa).

One can recognise an HTH arsR-type domain in the interval 7-101 (RKAALLDQVA…LVQVVADEHL (95 aa)). A DNA-binding region (H-T-H motif) is located at residues 41-64 (VEAIATATGMNLTTASANLQALKS). The 90-residue stretch at 129 to 218 (EAGEVTLVDV…WRLAGLPVDE (90 aa)) folds into the Rhodanese domain. Cysteine 177 functions as the Cysteine persulfide intermediate in the catalytic mechanism.

Part of a regulatory network that coordinates tolerance to the antitubercular drug bedaquiline. The chain is HTH-type transcriptional regulator Rv0324 from Mycobacterium tuberculosis (strain ATCC 25618 / H37Rv).